Consider the following 107-residue polypeptide: Phosphoribosyl-ATP pyrophosphatase (107 aa).

Belongs to the PRA-PH family.

The protein localises to the cytoplasm. The catalysed reaction is 1-(5-phospho-beta-D-ribosyl)-ATP + H2O = 1-(5-phospho-beta-D-ribosyl)-5'-AMP + diphosphate + H(+). Its pathway is amino-acid biosynthesis; L-histidine biosynthesis; L-histidine from 5-phospho-alpha-D-ribose 1-diphosphate: step 2/9. This Rhizobium johnstonii (strain DSM 114642 / LMG 32736 / 3841) (Rhizobium leguminosarum bv. viciae) protein is Phosphoribosyl-ATP pyrophosphatase.